The primary structure comprises 702 residues: MLNSTGELEFSNEEDAEIISQLTSLALSDGKSSAGAPEKTGYPDSVYVMAANIFQGIRIEKSAQKVLIKYGNEPLRSFSESEDQSFQRLSYELAFSALKYQDILETILIDSCIFPSTTIPDRKFQTRVLSDNEESISEVQEVENLLNSFKIKLAAALARCRIKHDALSIYHILPETVRKQELRASTLPLYAWINTCKISPEEVYNNLKRRGYNKVKSVLHIDDKVFAVDQHCYDVLIFPSHLKNDLINIDLFKDYKLIFQDKSRSLAVHSVKALLNMDDDILMVNTGSWYTVAHMSILTNNNTSKVFVCGVQSQAKDPDLKTLFTKMGCKNIEILRETFINIESKDHRLQKVKVILPLPRCSGLGVSNPVEFILNEHEDTEFLKDHSQGGISVDKLHILAQQQYEQLTHAMKFTKAQAVVYCTCSVCPEENEAVVKKALEFQDLGNKVQLYRLSPPVLPLCSLKEIQLSTDKFFRMEPSEITNGCFLSILTRERDPSETVSVKDVLARAAAKGLLDGIELGKSSKREKKKKKSKTSLTKAATTDNGIQMKIAEFLNRETKASANLSETVTKPSLPQKNTAQVGASSQTRKHKLAPHPAVPTFMKNTCPSRPRERQTHFIRPRPEDRMVALKPIEIVLPPVFMPFSSPQGIRSRMPTQHLYCHWVAPKPLVPTCLPTPSLSRKGEKPKDDTRSSLLRPPRRWL.

Cys-424 functions as the Nucleophile in the catalytic mechanism. Disordered stretches follow at residues 522–541 (KSSK…TKAA), 567–593 (ETVT…KHKL), and 675–702 (PTPS…RRWL). Positions 523–534 (SSKREKKKKKSK) are enriched in basic residues. Polar residues predominate over residues 567-587 (ETVTKPSLPQKNTAQVGASSQ). Over residues 681–691 (RKGEKPKDDTR) the composition is skewed to basic and acidic residues.

Belongs to the class I-like SAM-binding methyltransferase superfamily. RsmB/NOP family.

Its function is as follows. May have S-adenosyl-L-methionine-dependent methyl-transferase activity. The polypeptide is Putative methyltransferase NSUN7 (NSUN7) (Macaca fascicularis (Crab-eating macaque)).